The chain runs to 145 residues: MALRLILGFDYGTKQIGVAVGQAITGQARELCTLKAQNGVPDWNQVEALIKEWKPDAVVVGLPLNMDGSPSDMCVRAEKFARRLNGRFNVPFYTHDERLTTFEAKGERLARGGQKGSYRDNPVDAIAAALLLQGWLDENAGLLNT.

This sequence belongs to the YqgF nuclease family.

It is found in the cytoplasm. Could be a nuclease involved in processing of the 5'-end of pre-16S rRNA. This Pseudomonas fluorescens (strain ATCC BAA-477 / NRRL B-23932 / Pf-5) protein is Putative pre-16S rRNA nuclease.